The sequence spans 1692 residues: Protein TOPAZ1 (1692 aa).

Disordered stretches follow at residues 1–135 (MRRP…PGLD), 600–629 (ELSR…TGNK), and 894–919 (EPNV…EPSD). Positions 31–40 (GAAGGCGPEA) are enriched in gly residues. Positions 95-116 (SDPRGLEAAKEAELPLQTERHT) are enriched in basic and acidic residues. Over residues 608 to 627 (VISNTTEDTQLTSETQSLTG) the composition is skewed to polar residues. Positions 902–919 (QSTDSKYMETPVKKEPSD) are enriched in basic and acidic residues.

The protein resides in the cytoplasm. It is found in the cytosol. In terms of biological role, important for normal spermatogenesis and male fertility. Specifically required for progression to the post-meiotic stages of spermatocyte development. Seems to be necessary for normal expression levels of a number of testis-expressed gene transcripts, although its role in this process is unclear. The chain is Protein TOPAZ1 (TOPAZ1) from Homo sapiens (Human).